The following is a 642-amino-acid chain: Kinesin-like protein KIN-7L (642 aa).

The Kinesin motor domain maps to 3–337; that stretch reads KISVAVRFRP…LQFASRAKCV (335 aa). The span at 12–27 shows a compositional bias: low complexity; that stretch reads PPTTAAPAADQSPSST. Residues 12 to 33 are disordered; the sequence is PPTTAAPAADQSPSSTGGDREW. Residue 94–101 participates in ATP binding; sequence GQTSSGKT. Coiled coils occupy residues 343 to 428 and 540 to 612; these read VNEI…SNTS and RQQL…FSQA.

Belongs to the TRAFAC class myosin-kinesin ATPase superfamily. Kinesin family. KIN-7 subfamily.

The sequence is that of Kinesin-like protein KIN-7L from Oryza sativa subsp. japonica (Rice).